A 567-amino-acid polypeptide reads, in one-letter code: Urease subunit alpha (567 aa).

The Urease domain maps to 129–567 (GGVDTHIHWI…LPMAQRYFLF (439 aa)). Residues histidine 134, histidine 136, and lysine 217 each coordinate Ni(2+). At lysine 217 the chain carries N6-carboxylysine. Histidine 219 is a substrate binding site. Residues histidine 246 and histidine 272 each contribute to the Ni(2+) site. The active-site Proton donor is the histidine 320. Aspartate 360 lines the Ni(2+) pocket.

The protein belongs to the metallo-dependent hydrolases superfamily. Urease alpha subunit family. Heterotrimer of UreA (gamma), UreB (beta) and UreC (alpha) subunits. Three heterotrimers associate to form the active enzyme. It depends on Ni cation as a cofactor. In terms of processing, carboxylation allows a single lysine to coordinate two nickel ions.

It is found in the cytoplasm. The catalysed reaction is urea + 2 H2O + H(+) = hydrogencarbonate + 2 NH4(+). It functions in the pathway nitrogen metabolism; urea degradation; CO(2) and NH(3) from urea (urease route): step 1/1. This chain is Urease subunit alpha, found in Citrobacter koseri (strain ATCC BAA-895 / CDC 4225-83 / SGSC4696).